Consider the following 507-residue polypeptide: Histidine ammonia-lyase (507 aa).

Positions Ala-141–Gly-143 form a cross-link, 5-imidazolinone (Ala-Gly). Ser-142 is subject to 2,3-didehydroalanine (Ser).

It belongs to the PAL/histidase family. Contains an active site 4-methylidene-imidazol-5-one (MIO), which is formed autocatalytically by cyclization and dehydration of residues Ala-Ser-Gly.

The protein resides in the cytoplasm. It carries out the reaction L-histidine = trans-urocanate + NH4(+). The protein operates within amino-acid degradation; L-histidine degradation into L-glutamate; N-formimidoyl-L-glutamate from L-histidine: step 1/3. The chain is Histidine ammonia-lyase from Burkholderia pseudomallei (strain 1106a).